The sequence spans 232 residues: Thiamine import ATP-binding protein ThiQ (232 aa).

Residues 2–230 (LKLTDITWLY…KASASALLGI (229 aa)) enclose the ABC transporter domain. 32 to 39 (GPSGAGKS) provides a ligand contact to ATP.

The protein belongs to the ABC transporter superfamily. Thiamine importer (TC 3.A.1.19.1) family. As to quaternary structure, the complex is composed of two ATP-binding proteins (ThiQ), two transmembrane proteins (ThiP) and a solute-binding protein (ThiB).

The protein localises to the cell inner membrane. It carries out the reaction thiamine(out) + ATP + H2O = thiamine(in) + ADP + phosphate + H(+). In terms of biological role, part of the ABC transporter complex ThiBPQ involved in thiamine import. Responsible for energy coupling to the transport system. The protein is Thiamine import ATP-binding protein ThiQ of Escherichia coli O6:K15:H31 (strain 536 / UPEC).